A 49-amino-acid chain; its full sequence is Large ribosomal subunit protein bL33B (49 aa).

This sequence belongs to the bacterial ribosomal protein bL33 family.

Functionally, plays a role in sporulation at high temperatures. The protein is Large ribosomal subunit protein bL33B (rpmGB) of Bacillus subtilis (strain 168).